Here is a 5430-residue protein sequence, read N- to C-terminus: Microtubule-actin cross-linking factor 1 (5430 aa).

The disordered stretch occupies residues 1–47; it reads MSSSDEETLSERSCRSERSCRSERSYRSERSGSLSPCPPGDTLPWNL. An actin-binding region spans residues 1 to 295; that stretch reads MSSSDEETLS…VITYVSSIYD (295 aa). Phosphoserine is present on serine 4. Residues 9–30 are compositionally biased toward basic and acidic residues; the sequence is LSERSCRSERSCRSERSYRSER. 2 positions are modified to phosphoserine: serine 35 and serine 57. 2 Calponin-homology (CH) domains span residues 78–181 and 194–298; these read RVQK…LHFQ and MSAK…DAFP. LRR repeat units lie at residues 148-171 and 240-264; these read QRQVKLVNIRNDDITDGNPKLTLG and LVDMERVQIQSNRENLEQAFEVAER. Position 280 is a phosphoserine (serine 280). 2 LRR repeats span residues 377–399 and 441–464; these read LYKLLEVWIEFGRIKLPQGYHPN and LNCEEKLTLAKNTLQADAAHLESG. Residues 868-925 enclose the SH3 domain; the sequence is KSTLSVKAICDYRQIEITICKNDECVLEDNSQRTKWKVISPTGNEAMVPSVCLLIPPP. An LRR 5 repeat occupies 1050-1073; the sequence is ISELKNIRLRLEECEQRLLKQIQS. Serine 1122 carries the phosphoserine modification. LRR repeat units follow at residues 1128 to 1154, 1187 to 1210, and 1257 to 1282; these read ATTLRSELNLMVEKMDHVYGLSIVCLN, PADLSALESHRTTLQHWLSDVKDK, and HRVIAQLETRQSEVESIQEVLRDYRA. Phosphoserine is present on residues serine 1367 and serine 1376. LRR repeat units follow at residues 1579 to 1602 and 1629 to 1653; these read QQELSALQQNQSDLKDLQGDIQNH and LTALREKLYQAKEQYEGLQDRTREA. Spectrin repeat units follow at residues 1816–1891 and 1933–2041; these read ELQK…NFEE and QYQQ…ALLQ. Serine 1860 is modified (phosphoserine). One copy of the LRR 11 repeat lies at 1869 to 1891; that stretch reads KGDLRFVTISGQKVLETENNFEE. LRR repeat units follow at residues 2058–2083 and 2194–2220; these read LQSMKEVEQNLEGEQVAALSSGLIQE and IQELTLEMEDQKENLGTLEHLVTALGS. The Spectrin 3 repeat unit spans residues 2399-2507; the sequence is RMEEVQKEAS…TVARQKQLEE (109 aa). Phosphoserine occurs at positions 2429 and 2454. LRR repeat units follow at residues 2444-2467, 2534-2557, and 2702-2725; these read KAFLAELEQNSPKIQKVKEALAGL, GVLGPLSIDPNMLNAQKQQVQFML, and KKRLETVALPLQGLEDLAADRMNR. Spectrin repeat units lie at residues 2733-2837 and 2842-2945; these read TQQF…SRLK and KAQK…SLEE. Residues serine 2769 and serine 2895 each carry the phosphoserine modification. LRR repeat units follow at residues 2984 to 3009, 3105 to 3127, and 3214 to 3237; these read NKNLEKLKAQREVLQALDPQVDYLRD, NKIQALRLDIEDSEAECRKMLEE, and KEQVDPLQVKLQQVNGLGQGLIQS. Spectrin repeat units lie at residues 3169–3274, 3281–3383, 3388–3491, 3714–3818, 3825–3927, 4047–4152, 4157–4261, 4267–4370, 4375–4481, 4486–4589, 4594–4700, 4707–4808, and 4812–4916; these read EDFY…QLQE, KFQD…QLED, AKQF…SLLE, RSQQ…ARLE, NQFW…ALDE, LAEK…KLED, AVQY…HKLE, LGQF…QQLQ, QAQG…KLEE, ATEF…RSLD, RAKQ…KLEE, QFMD…RLEQ, and QAEE…QRLE. A Phosphothreonine modification is found at threonine 3368. LRR repeat units follow at residues 3737 to 3761 and 3846 to 3870; these read MALGPIRLEQDQTTAQLQVQKAFSI and AQLPPPAVDHEQLRQQQEEMRQLRE. Serine 4074 is subject to Phosphoserine. Residue lysine 4252 is modified to N6-acetyllysine. An LRR 22 repeat occupies 4538 to 4561; sequence RDQIIELDQTGNQLKFLSQKQDVV. The segment at 4993-5023 is disordered; it reads PTHAPFIEKSRSGSRKSLNQPTPPPMPILSQ. A Phosphoserine modification is found at serine 5009. 2 EF-hand domains span residues 5083–5118 and 5119–5154; these read HKKSRVMDFFRRIDKDQDGKITRQEFIDGILASKFP and TTKLEMTAVADIFDRDGDGYIDYYEFVAALHPNKDA. Ca(2+) is bound by residues aspartate 5096, aspartate 5098, aspartate 5100, lysine 5102, glutamate 5107, aspartate 5132, aspartate 5134, aspartate 5136, tyrosine 5138, and glutamate 5143. The 73-residue stretch at 5159–5231 folds into the GAR domain; that stretch reads TDADKIEDEV…EFLVKNDPCR (73 aa). The interval 5159-5430 is C-terminal tail; it reads TDADKIEDEV…ASPRTPCPKR (272 aa). Positions 5247–5430 are disordered; sequence PEGASQGMTP…ASPRTPCPKR (184 aa). The span at 5267–5301 shows a compositional bias: low complexity; it reads SSRAASPTRSSSSASQSNHSCTSMPSSPATPASGT. Threonine 5296 carries the post-translational modification Phosphothreonine. Residues 5317–5341 show a composition bias toward polar residues; the sequence is TFHSSRTSLAGDTSNSSSPASTGAK. A phosphoserine mark is found at serine 5321 and serine 5334. Residues 5352–5366 are compositionally biased toward low complexity; it reads SRPGSRAGSRAGSRA. Residues 5355–5370 are 4 X 4 AA tandem repeats of [GS]-S-R-[AR]; the sequence is GSRAGSRAGSRASSRR. Phosphoserine is present on residues serine 5372 and serine 5375. Polar residues predominate over residues 5381–5391; sequence ETQSACSDTSE. The segment covering 5392 to 5403 has biased composition (low complexity); sequence SSAAGGQGSSRR.

This sequence belongs to the plakin or cytolinker family. In terms of assembly, interacts with MAPRE1, CLASP1, CLASP2 and GOLGA4. Interacts with AXIN1 and LRP6. Found in a complex composed of MACF1, APC; AXIN1, CTNNB1 and GSK3B. Interacts with CAMSAP3. Post-translationally, phosphorylated on serine residues in the C-terminal tail by GSK3B. Phosphorylation inhibits microtubule-binding and this plays a critical role in bulge stem cell migration and skin wound repair. Wnt-signaling can repress phosphorylation.

It is found in the cytoplasm. The protein resides in the cytoskeleton. It localises to the golgi apparatus. Its subcellular location is the cell membrane. The protein localises to the cell projection. It is found in the ruffle membrane. The protein resides in the membrane. Functionally, F-actin-binding protein which plays a role in cross-linking actin to other cytoskeletal proteins and also binds to microtubules. Plays an important role in ERBB2-dependent stabilization of microtubules at the cell cortex. Acts as a positive regulator of Wnt receptor signaling pathway and is involved in the translocation of AXIN1 and its associated complex (composed of APC, CTNNB1 and GSK3B) from the cytoplasm to the cell membrane. Has actin-regulated ATPase activity and is essential for controlling focal adhesions (FAs) assembly and dynamics. Interaction with CAMSAP3 at the minus ends of non-centrosomal microtubules tethers microtubules minus-ends to actin filaments, regulating focal adhesion size and cell migration. May play role in delivery of transport vesicles containing GPI-linked proteins from the trans-Golgi network through its interaction with GOLGA4. Plays a key role in wound healing and epidermal cell migration. Required for efficient upward migration of bulge cells in response to wounding and this function is primarily rooted in its ability to coordinate microtubule dynamics and polarize hair follicle stem cells. As a regulator of actin and microtubule arrangement and stabilization, it plays an essential role in neurite outgrowth, branching and spine formation during brain development. The sequence is that of Microtubule-actin cross-linking factor 1 from Rattus norvegicus (Rat).